Here is a 155-residue protein sequence, read N- to C-terminus: SsrA-binding protein (155 aa).

It belongs to the SmpB family.

It localises to the cytoplasm. Required for rescue of stalled ribosomes mediated by trans-translation. Binds to transfer-messenger RNA (tmRNA), required for stable association of tmRNA with ribosomes. tmRNA and SmpB together mimic tRNA shape, replacing the anticodon stem-loop with SmpB. tmRNA is encoded by the ssrA gene; the 2 termini fold to resemble tRNA(Ala) and it encodes a 'tag peptide', a short internal open reading frame. During trans-translation Ala-aminoacylated tmRNA acts like a tRNA, entering the A-site of stalled ribosomes, displacing the stalled mRNA. The ribosome then switches to translate the ORF on the tmRNA; the nascent peptide is terminated with the 'tag peptide' encoded by the tmRNA and targeted for degradation. The ribosome is freed to recommence translation, which seems to be the essential function of trans-translation. This chain is SsrA-binding protein, found in Bacillus cytotoxicus (strain DSM 22905 / CIP 110041 / 391-98 / NVH 391-98).